A 523-amino-acid chain; its full sequence is Probable methylmalonate-semialdehyde/malonate-semialdehyde dehydrogenase [acylating], mitochondrial (523 aa).

The N-terminal 22 residues, 1–22 (MLSRLARVQPKCQQLAHFSTSK), are a transit peptide targeting the mitochondrion. The NAD(+) site is built by Phe-175, Lys-199, and Glu-202. The active-site Nucleophile is Cys-307. Glu-407 contacts NAD(+).

The protein belongs to the aldehyde dehydrogenase family. As to quaternary structure, homodimer.

It is found in the mitochondrion. The catalysed reaction is 2-methyl-3-oxopropanoate + NAD(+) + CoA + H2O = propanoyl-CoA + hydrogencarbonate + NADH + H(+). It carries out the reaction 3-oxopropanoate + NAD(+) + CoA + H2O = hydrogencarbonate + acetyl-CoA + NADH + H(+). In terms of biological role, probable malonate and methylmalonate semialdehyde dehydrogenase involved in the catabolism of valine, thymine, and compounds catabolized by way of beta-alanine, including uracil and cytidine. This is Probable methylmalonate-semialdehyde/malonate-semialdehyde dehydrogenase [acylating], mitochondrial (alh-8) from Caenorhabditis elegans.